Here is a 616-residue protein sequence, read N- to C-terminus: Chaperone protein HscA homolog (616 aa).

The protein belongs to the heat shock protein 70 family.

Its function is as follows. Chaperone involved in the maturation of iron-sulfur cluster-containing proteins. Has a low intrinsic ATPase activity which is markedly stimulated by HscB. The protein is Chaperone protein HscA homolog of Aliivibrio fischeri (strain MJ11) (Vibrio fischeri).